The sequence spans 430 residues: Putative O-antigen transporter (430 aa).

Helical transmembrane passes span 23-39, 45-61, 96-112, 131-147, 163-179, 192-208, 236-252, 266-282, 309-325, 342-358, 373-389, and 400-416; these read IIIAGVQLASISYLISM, YAIFSLLTGLLVWCSAV, IAIIFFIALFYIFSGVI, LFFTSCLVFSSIGIGAI, LLNALSYMIGMLGLLYI, LIVLYLPVGMISLCYIV, LFTLLSIVVLQTDYMVI, VTMKIFGLVFFIYTAIL, ILLGSLYVVGCTIFIYL, VSILSFMLIGIYFCIRV, LKILWILVPLQAIIGGI, and ISGVLLGLIISFALTVF.

The protein localises to the cell inner membrane. It functions in the pathway bacterial outer membrane biogenesis; LPS O-antigen biosynthesis. May be involved in the translocation process of the nascent O-polysaccharide molecules and/or its ligation to lipid A core units. The polypeptide is Putative O-antigen transporter (rfbX) (Salmonella typhimurium (strain LT2 / SGSC1412 / ATCC 700720)).